Here is a 425-residue protein sequence, read N- to C-terminus: Histidine--tRNA ligase (425 aa).

The protein belongs to the class-II aminoacyl-tRNA synthetase family. As to quaternary structure, homodimer.

It is found in the cytoplasm. It catalyses the reaction tRNA(His) + L-histidine + ATP = L-histidyl-tRNA(His) + AMP + diphosphate + H(+). The protein is Histidine--tRNA ligase of Pelotomaculum thermopropionicum (strain DSM 13744 / JCM 10971 / SI).